The sequence spans 193 residues: 3-isopropylmalate dehydratase small subunit (193 aa).

The protein belongs to the LeuD family. LeuD type 1 subfamily. As to quaternary structure, heterodimer of LeuC and LeuD.

It carries out the reaction (2R,3S)-3-isopropylmalate = (2S)-2-isopropylmalate. It participates in amino-acid biosynthesis; L-leucine biosynthesis; L-leucine from 3-methyl-2-oxobutanoate: step 2/4. In terms of biological role, catalyzes the isomerization between 2-isopropylmalate and 3-isopropylmalate, via the formation of 2-isopropylmaleate. The protein is 3-isopropylmalate dehydratase small subunit of Listeria monocytogenes serotype 4b (strain CLIP80459).